The sequence spans 196 residues: DnaA initiator-associating protein DiaA (196 aa).

The SIS domain occupies leucine 34 to aspartate 196.

Belongs to the SIS family. DiaA subfamily. Homotetramer; dimer of dimers.

Required for the timely initiation of chromosomal replication via direct interactions with the DnaA initiator protein. The chain is DnaA initiator-associating protein DiaA from Shigella boydii serotype 18 (strain CDC 3083-94 / BS512).